The chain runs to 157 residues: MKIGLIVIGKTDAGYFVEAINEYKNRLTHYIPFEMEVIPDIKNVKNLSEAQQKEKEGELILKALQPGDYLVLLDEKGKEFTSMQFSTYLEKKMHTVPKRLVFVVGGPYGFSEAVYKAASEKISLSKMTFSHQMIRLIFIEQIYRAMTILNNEPYHHE.

S-adenosyl-L-methionine contacts are provided by residues Leu-73, Gly-105, and 124 to 129 (LSKMTF).

The protein belongs to the RNA methyltransferase RlmH family. As to quaternary structure, homodimer.

Its subcellular location is the cytoplasm. The catalysed reaction is pseudouridine(1915) in 23S rRNA + S-adenosyl-L-methionine = N(3)-methylpseudouridine(1915) in 23S rRNA + S-adenosyl-L-homocysteine + H(+). Specifically methylates the pseudouridine at position 1915 (m3Psi1915) in 23S rRNA. This Parabacteroides distasonis (strain ATCC 8503 / DSM 20701 / CIP 104284 / JCM 5825 / NCTC 11152) protein is Ribosomal RNA large subunit methyltransferase H.